The chain runs to 369 residues: tRNA/tmRNA (uracil-C(5))-methyltransferase (369 aa).

Q190, Y218, N223, E239, and D301 together coordinate S-adenosyl-L-methionine. C326 functions as the Nucleophile in the catalytic mechanism. E360 (proton acceptor) is an active-site residue.

It belongs to the class I-like SAM-binding methyltransferase superfamily. RNA M5U methyltransferase family. TrmA subfamily.

It carries out the reaction uridine(54) in tRNA + S-adenosyl-L-methionine = 5-methyluridine(54) in tRNA + S-adenosyl-L-homocysteine + H(+). It catalyses the reaction uridine(341) in tmRNA + S-adenosyl-L-methionine = 5-methyluridine(341) in tmRNA + S-adenosyl-L-homocysteine + H(+). In terms of biological role, dual-specificity methyltransferase that catalyzes the formation of 5-methyluridine at position 54 (m5U54) in all tRNAs, and that of position 341 (m5U341) in tmRNA (transfer-mRNA). This is tRNA/tmRNA (uracil-C(5))-methyltransferase from Vibrio cholerae serotype O1 (strain ATCC 39541 / Classical Ogawa 395 / O395).